Reading from the N-terminus, the 266-residue chain is UPF0354 protein Lm4b_01619 (266 aa).

This sequence belongs to the UPF0354 family.

The sequence is that of UPF0354 protein Lm4b_01619 from Listeria monocytogenes serotype 4b (strain CLIP80459).